Reading from the N-terminus, the 215-residue chain is Uracil-DNA glycosylase (215 aa).

Aspartate 59 serves as the catalytic Proton acceptor.

This sequence belongs to the uracil-DNA glycosylase (UDG) superfamily. UNG family.

Its subcellular location is the cytoplasm. It catalyses the reaction Hydrolyzes single-stranded DNA or mismatched double-stranded DNA and polynucleotides, releasing free uracil.. Excises uracil residues from the DNA which can arise as a result of misincorporation of dUMP residues by DNA polymerase or due to deamination of cytosine. The sequence is that of Uracil-DNA glycosylase from Aliarcobacter butzleri (strain RM4018) (Arcobacter butzleri).